Consider the following 721-residue polypeptide: Catalase-peroxidase (721 aa).

The segment at residues 89–212 (WHSAGTYRTG…LAAVQMGLIY (124 aa)) is a cross-link (tryptophyl-tyrosyl-methioninium (Trp-Tyr) (with M-238)). His90 acts as the Proton acceptor in catalysis. The segment at residues 212-238 (YVNPEGPNGDPDPFAAAVDIRETFARM) is a cross-link (tryptophyl-tyrosyl-methioninium (Tyr-Met) (with W-89)). Heme b is bound at residue His253.

The protein belongs to the peroxidase family. Peroxidase/catalase subfamily. In terms of assembly, homodimer or homotetramer. Heme b serves as cofactor. In terms of processing, formation of the three residue Trp-Tyr-Met cross-link is important for the catalase, but not the peroxidase activity of the enzyme.

The catalysed reaction is H2O2 + AH2 = A + 2 H2O. The enzyme catalyses 2 H2O2 = O2 + 2 H2O. Bifunctional enzyme with both catalase and broad-spectrum peroxidase activity. The protein is Catalase-peroxidase of Shewanella baltica (strain OS155 / ATCC BAA-1091).